Here is a 464-residue protein sequence, read N- to C-terminus: uncharacterized protein (464 aa).

12 consecutive transmembrane segments (helical) span residues 7–27, 37–57, 94–114, 121–141, 153–173, 196–216, 231–251, 282–302, 329–349, 359–379, 401–421, and 432–452; these read VLNVFSLVMINVIAVDSLRTL, LVFYYIFAALTFFIPVALVAA, VVWYPTMLAFIAATLSYLIAP, FYLLGTALTLFWVFTFLNCFG, ASIGTLLPMIVIIVLGAVWIF, LSLFSAVLFGLIGMEMSAVHA, FYSALLIISTLSLGSLAIVIV, VIAVLIILGGLSGVSAWIIGP, VAILLTQGVIFTVLSTVFILL, LSDLSAQMALLVYIMMFAAAI, MSLISGIGIICCIAAMIVGFI, and FLFECFLIGGLILFVFIPWLF.

The protein belongs to the amino acid-polyamine-organocation (APC) superfamily.

It localises to the cell membrane. This is an uncharacterized protein from Legionella pneumophila subsp. pneumophila (strain Philadelphia 1 / ATCC 33152 / DSM 7513).